A 208-amino-acid chain; its full sequence is Large ribosomal subunit protein uL3 (208 aa).

The disordered stretch occupies residues 134–153 (SKFHREAGSTGQCTSPGRTF).

It belongs to the universal ribosomal protein uL3 family. In terms of assembly, part of the 50S ribosomal subunit. Forms a cluster with proteins L14 and L19.

Its function is as follows. One of the primary rRNA binding proteins, it binds directly near the 3'-end of the 23S rRNA, where it nucleates assembly of the 50S subunit. The chain is Large ribosomal subunit protein uL3 from Treponema pallidum (strain Nichols).